Consider the following 135-residue polypeptide: ATP synthase epsilon chain (135 aa).

The disordered stretch occupies residues 101 to 122 (TAVTKLEGQPSTPEKVKAQQLF).

It belongs to the ATPase epsilon chain family. As to quaternary structure, F-type ATPases have 2 components, CF(1) - the catalytic core - and CF(0) - the membrane proton channel. CF(1) has five subunits: alpha(3), beta(3), gamma(1), delta(1), epsilon(1). CF(0) has three main subunits: a, b and c.

It localises to the cellular thylakoid membrane. Its function is as follows. Produces ATP from ADP in the presence of a proton gradient across the membrane. The protein is ATP synthase epsilon chain of Synechococcus sp. (strain CC9311).